A 496-amino-acid polypeptide reads, in one-letter code: MAFLSLPILTALGAVVYVLFQLVYNLYFHPLRDYPGPLLWRASSLPWKLTLLRGTMHHDLMRHHQTYGDTVRIKPDEISYANGQAWRDIHAHVPGRPEFLKDPVRLPLAPNGVMSILVSDTRNHARFRSLFGHAFSDKGLRAQEPTIARYADLLVEVLREVADTGKSVEMVRYFNMAIFDSIGALSFGESFDSLRNRELHPWVDTIHKNLKSVAISHVLRSMGVEFLAPYLMPAELRGKRQENYTYAIEKLKKRMQKTGDQGDFWDRVIVKSADGNQSGDGMSYGEMINNAAVMVVAGSETTSSALCGCTYLLCKFDKMDKAVAEVRGAFAAADQIDLVSVSRLPYLTAVIDETLRMYPSVPGQPPRVVPEGGAIVCGRFVPAETRVGVSHLGAYYAPYNFSHADKFIPERHLAGAKLEEPFRHDNYAAYQPWSVGVRNCIGRNLAYAEVRLTLAKLLWHFDISLDEERTGNFLDQKIWSIWAKRELYLEIRTREF.

Residues 3-23 form a helical membrane-spanning segment; the sequence is FLSLPILTALGAVVYVLFQLV. Residue C440 participates in heme binding.

The protein belongs to the cytochrome P450 family. The cofactor is heme.

It localises to the membrane. The catalysed reaction is versicolorin B + NADPH + O2 + H(+) = versicolorin A + NADP(+) + 2 H2O. It participates in mycotoxin biosynthesis; sterigmatocystin biosynthesis. Cytochrome P450 monooxygenase; part of the gene cluster that mediates the biosynthesis of sterigmatocystin (ST), a polyketide-derived furanocoumarin which is part of the most toxic and carcinogenic compounds among the known mycotoxins. The first step in the biosynthesis of sterigmatocystin is the production of hexanoate by the fatty acid synthase (FAS) units stcJ and stcK. The polyketide backbone is assembled by the non-reducing polyketide synthase stcA by condensation of the starter hexanoyl-CoA and 7 malonyl-CoA extender units followed by cyclization and release of norsolorinic acid. Norsolorinic acid is the first stable intermediate in the biosynthesis of sterigmatocystin and is converted into averantin (AVN) by the ketoreductase stcE which reduces the hexanoate ketone to an alcohol. Averantin is then oxidized into 5'-hydroxyaverantin (HAVN) by the cytochrome P450 monooxygenase stcF. 5'-hydroxyaverantin is further converted to 5'-oxyaverantin (OAVN) by the 5'-hydroxyaverantin dehydrogenase stcG. The next step is the conversion of OAVN into averufin (AVF) which is catalyzed by a yet to be identified enzyme. The cytochrome P450 monooxygenase stcB and the flavin-binding monooxygenase stcW are both required for the conversion of averufin to 1-hydroxyversicolorone. The esterase stcI probably catalyzes the formation of versiconal hemiacetal acetate from 1-hydroxyversicolorone. The oxydoreductase stcN then probably catalyzes the biosynthetic step from versiconal to versicolorin B (VERB). The next step is performed by the versicolorin B desaturase stcL to produce versicolorin A (VERA). The ketoreductase stcU and the cytochrome P450 monooxygenase stcS are involved in the conversion of versicolorin A to demethylsterigmatocystin. The Baeyer-Villiger oxidas stcQ and the reductase stcR might be involved in the biosynthetic step from versicolorin A to demethylsterigmatocystin. The final step in the biosynthesis of sterigmatocystin is the methylation of demethylsterigmatocystin catalyzed by the methyltransferase stcP. This Emericella nidulans (strain FGSC A4 / ATCC 38163 / CBS 112.46 / NRRL 194 / M139) (Aspergillus nidulans) protein is Versicolorin B desaturase stcL.